We begin with the raw amino-acid sequence, 1247 residues long: Nidogen-1 (1247 aa).

Residues 1-28 form the signal peptide; sequence MLASSSRIRAAWTRALLLPLLLAGPVGC. An NIDO domain is found at 106-268; that stretch reads PFLADLDTTD…GVWVFEIGSP (163 aa). 2 positions are modified to sulfotyrosine: Y289 and Y296. In terms of domain architecture, EGF-like 1 spans 386 to 426; the sequence is SRQTCANNRHQCSVHAECRDYATGFCCSCVAGYTGNGRQCV. 19 disulfide bridges follow: C390–C403, C397–C412, C411–C618, C414–C425, C672–C685, C679–C695, C697–C708, C714–C727, C721–C736, C738–C750, C762–C777, C769–C787, C789–C800, C806–C817, C811–C826, C828–C839, C849–C878, C889–C896, and C898–C919. The Nidogen G2 beta-barrel domain maps to 430–667; it reads SPQRVNGKVK…GPVREGSPDA (238 aa). The EGF-like 2 domain maps to 668 to 709; sequence LQNPCYIGTHGCDTNAACRPGPRTQFTCECSIGFRGDGRTCY. A Cell attachment site motif is present at residues 702–704; the sequence is RGD. Residues 710-751 enclose the EGF-like 3; calcium-binding domain; it reads DIDECSEQPSVCGSHTICNNHPGTFRCECVEGYQFSDEGTCV. One can recognise an EGF-like 4 domain in the interval 758–801; the sequence is PINYCETGLHNCDIPQRAQCIYTGGSSYTCSCLPGFSGDGQACQ. In terms of domain architecture, EGF-like 5; calcium-binding spans 802-840; it reads DVDECQPSRCHPDAFCYNTPGSFTCQCKPGYQGDGFRCV. A Thyroglobulin type-1 domain is found at 846–919; that stretch reads KTRCQHEREH…RTRPGMTPPC (74 aa). 2 O-linked (GalNAc...) threonine glycosylation sites follow: T922 and T935. LDL-receptor class B repeat units follow at residues 990–1032, 1033–1075, 1076–1120, and 1121–1162; these read KMVY…DHLG, RNIF…DSVR, GNLY…DAFS, and SQLC…YGKN. The 37-residue stretch at 1208–1244 folds into the EGF-like 6 domain; sequence GHNYCSVNNGGCTHLCLATPGSRTCRCPDNTLGVDCI. 3 disulfide bridges follow: C1212–C1223, C1219–C1232, and C1234–C1243.

In terms of assembly, interacts with FBLN1. Interacts with LGALS3BP. Interacts with PLXDC1. Interacts with SVEP1. In terms of processing, N- and O-glycosylated.

The protein resides in the secreted. The protein localises to the extracellular space. It localises to the extracellular matrix. Its subcellular location is the basement membrane. Its function is as follows. Sulfated glycoprotein widely distributed in basement membranes and tightly associated with laminin. Also binds to collagen IV and perlecan. It probably has a role in cell-extracellular matrix interactions. The sequence is that of Nidogen-1 (NID1) from Homo sapiens (Human).